Consider the following 287-residue polypeptide: 4-hydroxybenzoate octaprenyltransferase (287 aa).

The next 9 membrane-spanning stretches (helical) occupy residues 22–42, 45–65, 91–111, 114–134, 139–159, 161–181, 212–232, 236–256, and 267–287; these read IGTL…AQGF, LGVL…GCVI, TSTE…LLVL, NSLT…YPFM, QLPQ…AFAA, ANAL…WTIA, IIIA…GWLE, WIYF…QLQI, and AFLD…LGYL.

This sequence belongs to the UbiA prenyltransferase family. Mg(2+) is required as a cofactor.

Its subcellular location is the cell inner membrane. It carries out the reaction all-trans-octaprenyl diphosphate + 4-hydroxybenzoate = 4-hydroxy-3-(all-trans-octaprenyl)benzoate + diphosphate. It participates in cofactor biosynthesis; ubiquinone biosynthesis. Functionally, catalyzes the prenylation of para-hydroxybenzoate (PHB) with an all-trans polyprenyl group. Mediates the second step in the final reaction sequence of ubiquinone-8 (UQ-8) biosynthesis, which is the condensation of the polyisoprenoid side chain with PHB, generating the first membrane-bound Q intermediate 3-octaprenyl-4-hydroxybenzoate. The polypeptide is 4-hydroxybenzoate octaprenyltransferase (Psychromonas ingrahamii (strain DSM 17664 / CCUG 51855 / 37)).